A 120-amino-acid chain; its full sequence is Spermidine export protein MdtJ (120 aa).

Transmembrane regions (helical) follow at residues 1–21, 31–51, 54–74, and 81–101; these read MFYWILLALAIVAEITGTLSM, AGYILMLVMITLSYIFLSFAV, IALGVAYALWEGIGILFITVF, and EVLSTMKIVGLLTLIVGIVLI.

The protein belongs to the drug/metabolite transporter (DMT) superfamily. Small multidrug resistance (SMR) (TC 2.A.7.1) family. MdtJ subfamily. Forms a complex with MdtI.

The protein resides in the cell inner membrane. Its function is as follows. Catalyzes the excretion of spermidine. In Salmonella arizonae (strain ATCC BAA-731 / CDC346-86 / RSK2980), this protein is Spermidine export protein MdtJ.